The chain runs to 1070 residues: DNA-directed RNA polymerase subunit beta (1070 aa).

It belongs to the RNA polymerase beta chain family. In plastids the minimal PEP RNA polymerase catalytic core is composed of four subunits: alpha, beta, beta', and beta''. When a (nuclear-encoded) sigma factor is associated with the core the holoenzyme is formed, which can initiate transcription.

The protein resides in the plastid. It is found in the chloroplast. The enzyme catalyses RNA(n) + a ribonucleoside 5'-triphosphate = RNA(n+1) + diphosphate. Its function is as follows. DNA-dependent RNA polymerase catalyzes the transcription of DNA into RNA using the four ribonucleoside triphosphates as substrates. This chain is DNA-directed RNA polymerase subunit beta, found in Nandina domestica (Heavenly bamboo).